The primary structure comprises 76 residues: uncharacterized protein (76 aa).

It localises to the host cytoplasm. This is an uncharacterized protein from Escherichia phage Mu (Bacteriophage Mu).